Here is a 76-residue protein sequence, read N- to C-terminus: MKLTCMMIVAVLFLTAWTFATADDSSNGLGNLFLKAHHEMKNPEASKLNERCLDAGEVCDIFFPTCCGYCILLFCA.

Residues 1–22 (MKLTCMMIVAVLFLTAWTFATA) form the signal peptide. The propeptide occupies 23-51 (DDSSNGLGNLFLKAHHEMKNPEASKLNER). Cystine bridges form between C52/C67, C59/C70, and C66/C75.

This sequence belongs to the conotoxin O1 superfamily. In terms of tissue distribution, expressed by the venom duct.

The protein localises to the secreted. Omega-conotoxins act at presynaptic membranes, they bind and block voltage-gated calcium channels (Cav). The protein is Omega-conotoxin-like TeA61 of Conus textile (Cloth-of-gold cone).